The chain runs to 72 residues: SRY-related protein MG43 (72 aa).

The HMG box DNA-binding region spans 1–69; it reads VKRPMNAFMV…KHMADYPDYK (69 aa).

The protein localises to the nucleus. The chain is SRY-related protein MG43 from Tarentola mauritanica (Common wall gecko).